The chain runs to 227 residues: Venom allergen 5 (227 aa).

The N-terminal stretch at 1–21 (MKISCLICLVIVLTIIHLSQA) is a signal peptide. Intrachain disulfides connect cysteine 25–cysteine 37, cysteine 29–cysteine 125, cysteine 49–cysteine 117, and cysteine 193–cysteine 210. Residues 69–212 (EEHNRFRQKV…MQIHYLICNY (144 aa)) form the SCP domain.

Belongs to the CRISP family. Venom allergen 5-like subfamily. As to expression, expressed by the venom gland.

The protein resides in the secreted. This chain is Venom allergen 5, found in Polistes dominula (European paper wasp).